We begin with the raw amino-acid sequence, 517 residues long: FAD-dependent monooxygenase FUP4 (517 aa).

The signal sequence occupies residues 1 to 19 (MRQSSTLTWTSVLLAPLAA). Residues 75-246 (QALRPACLVH…TRFDLDLYDQ (172 aa)) enclose the FAD-binding PCMH-type domain. A Pros-8alpha-FAD histidine modification is found at His112. N-linked (GlcNAc...) asparagine glycosylation is found at Asn163, Asn208, and Asn346.

This sequence belongs to the oxygen-dependent FAD-linked oxidoreductase family. Requires FAD as cofactor.

It functions in the pathway secondary metabolite biosynthesis; terpenoid biosynthesis. FAD-dependent monooxygenase; part of the gene cluster that mediates the biosynthesis of the mycotoxin fusaproliferin (FUP) that belongs to the class of bicyclic sesterterpenoids. FUP4 catalyzes the oxidation of the hydroxy group at the C-16 position of preterpestacin III to a keto group, leading to the formation of (-)-terpestacin. The product of FUP1, preterpestacin I, might also serve as a substrate of FUP4 to yield oxo-preterpestacin I. The FUP biosynthetic pathway starts with the enzyme encoded by FUP1 that combines a C-terminal prenyltransferase domain responsible for the synthesis of geranylgeranyl diphosphate with the N-terminal terpene cyclase domain, to yield preterpestacin I. Preterpestacin I is then decorated by oxygenation steps that are catalyzed by two cytochrome P450 monooxygenases. First, FUP2 introduces a hydroxyl group at the C-24 position resulting in the formation of preterpestacin IIa. The second P450 monooxygenase catalyzes the hydroxylation at C-16 and C-17 of preterpestacin IIa, producing preterpestacin III. Subsequently, the FAD-dependent oxidoreductase FUP4 catalyzes the oxidation of the hydroxy group at the C-16 position to a keto group, leading to the formation of (-)-terpestacin, which is the immediate precursor of FUP. The final step in the proposed biosynthetic pathway is the addition of an acetyl group at the C-24 position of terpestacin, which is catalyzed by the acetyltransferase FUP5. This Fusarium proliferatum (strain ET1) (Orchid endophyte fungus) protein is FAD-dependent monooxygenase FUP4.